A 36-amino-acid polypeptide reads, in one-letter code: PSEQYQPYPEQQQPFLQQQPLELQQQQXXLVLFLQK.

This sequence belongs to the gliadin/glutenin family. In terms of assembly, monomer.

It localises to the vacuole. It is found in the aleurone grain. Its function is as follows. Seed storage protein. Serves as a source of nitrogen, carbon, and sulfur for the young developing seedling. The polypeptide is Avenin-A (Avena sativa (Oat)).